A 339-amino-acid polypeptide reads, in one-letter code: Heat-inducible transcription repressor HrcA (339 aa).

Belongs to the HrcA family.

Functionally, negative regulator of class I heat shock genes (grpE-dnaK-dnaJ and groELS operons). Prevents heat-shock induction of these operons. This is Heat-inducible transcription repressor HrcA from Paraburkholderia phytofirmans (strain DSM 17436 / LMG 22146 / PsJN) (Burkholderia phytofirmans).